Reading from the N-terminus, the 217-residue chain is GTP-binding protein yptV2 (217 aa).

20 to 27 is a binding site for GTP; sequence GDSGVGKS. Residues 42 to 50 carry the Effector region motif; sequence FITTIGIDF. GTP is bound by residues 68–72 and 126–129; these read DTAGQ and NKLD. The interval 198-217 is disordered; it reads QPVRLTSGSPSPAQGKSCCR. The span at 201-211 shows a compositional bias: polar residues; it reads RLTSGSPSPAQ. S-geranylgeranyl cysteine attachment occurs at residues Cys215 and Cys216.

This sequence belongs to the small GTPase superfamily. Rab family.

Its subcellular location is the cell membrane. Its function is as follows. Protein transport. Probably involved in vesicular traffic. The sequence is that of GTP-binding protein yptV2 (YPTV2) from Volvox carteri (Green alga).